The primary structure comprises 290 residues: MRIADYSVTKAVLDRHGFTFKKSFGQNFLTDTNILQKIVDTAEIDQNVNVIEIGPGIGALTEFLAENAAEVMAFEIDDRLVPILADTLRDFDNVQVVNQDILKADLQTQIKQFKNPDLPIKVVANLPYYITTPILMHLIESKIPFQEFVVMMQREVADRISAEPNTKAYGSLSIAVQYYMTAKVAFIVPRTVFVPAPNVDSAILKMVRRDQPLIEVKDEDFFFRVSRLSFVHRRKTLWNNLTSHFGKSEDIKTKLEKGLALADIKPSIRGEALSIQDFGKLADALKEVGL.

S-adenosyl-L-methionine contacts are provided by N27, L29, G54, E75, D100, and N125.

The protein belongs to the class I-like SAM-binding methyltransferase superfamily. rRNA adenine N(6)-methyltransferase family. RsmA subfamily.

Its subcellular location is the cytoplasm. It catalyses the reaction adenosine(1518)/adenosine(1519) in 16S rRNA + 4 S-adenosyl-L-methionine = N(6)-dimethyladenosine(1518)/N(6)-dimethyladenosine(1519) in 16S rRNA + 4 S-adenosyl-L-homocysteine + 4 H(+). Specifically dimethylates two adjacent adenosines (A1518 and A1519) in the loop of a conserved hairpin near the 3'-end of 16S rRNA in the 30S particle. May play a critical role in biogenesis of 30S subunits. This is Ribosomal RNA small subunit methyltransferase A from Streptococcus pyogenes serotype M18 (strain MGAS8232).